A 155-amino-acid polypeptide reads, in one-letter code: Endoribonuclease YbeY (155 aa).

Residues His-114, His-118, and His-124 each contribute to the Zn(2+) site.

It belongs to the endoribonuclease YbeY family. It depends on Zn(2+) as a cofactor.

Its subcellular location is the cytoplasm. Single strand-specific metallo-endoribonuclease involved in late-stage 70S ribosome quality control and in maturation of the 3' terminus of the 16S rRNA. The sequence is that of Endoribonuclease YbeY from Citrobacter koseri (strain ATCC BAA-895 / CDC 4225-83 / SGSC4696).